A 294-amino-acid chain; its full sequence is UDP-3-O-acyl-N-acetylglucosamine deacetylase (294 aa).

H75, H232, and D236 together coordinate Zn(2+). The Proton donor role is filled by H259.

Belongs to the LpxC family. Zn(2+) serves as cofactor.

The catalysed reaction is a UDP-3-O-[(3R)-3-hydroxyacyl]-N-acetyl-alpha-D-glucosamine + H2O = a UDP-3-O-[(3R)-3-hydroxyacyl]-alpha-D-glucosamine + acetate. The protein operates within glycolipid biosynthesis; lipid IV(A) biosynthesis; lipid IV(A) from (3R)-3-hydroxytetradecanoyl-[acyl-carrier-protein] and UDP-N-acetyl-alpha-D-glucosamine: step 2/6. Its function is as follows. Catalyzes the hydrolysis of UDP-3-O-myristoyl-N-acetylglucosamine to form UDP-3-O-myristoylglucosamine and acetate, the committed step in lipid A biosynthesis. The chain is UDP-3-O-acyl-N-acetylglucosamine deacetylase from Campylobacter jejuni subsp. jejuni serotype O:2 (strain ATCC 700819 / NCTC 11168).